Consider the following 200-residue polypeptide: NAD(P)H dehydrogenase (quinone) (200 aa).

The Flavodoxin-like domain maps to 4–191 (VLVLYYSSYG…DIARYQGKHV (188 aa)). FMN is bound by residues 10–15 (SSYGHV) and 79–81 (TRF). An NAD(+)-binding site is contributed by Tyr12. Trp99 provides a ligand contact to substrate. FMN contacts are provided by residues 114 to 120 (STGTQHG) and His135.

This sequence belongs to the WrbA family. Requires FMN as cofactor.

The enzyme catalyses a quinone + NADH + H(+) = a quinol + NAD(+). It carries out the reaction a quinone + NADPH + H(+) = a quinol + NADP(+). The protein is NAD(P)H dehydrogenase (quinone) of Burkholderia ambifaria (strain MC40-6).